Consider the following 227-residue polypeptide: 3,4-dihydroxy-2-butanone 4-phosphate synthase (227 aa).

D-ribulose 5-phosphate is bound by residues 45–46 (RE), Asp-50, 158–162 (RRGHT), and Glu-182. Glu-46 is a Mg(2+) binding site. His-161 is a binding site for Mg(2+).

It belongs to the DHBP synthase family. Homodimer. Mg(2+) is required as a cofactor. Mn(2+) serves as cofactor.

The catalysed reaction is D-ribulose 5-phosphate = (2S)-2-hydroxy-3-oxobutyl phosphate + formate + H(+). It functions in the pathway cofactor biosynthesis; riboflavin biosynthesis; 2-hydroxy-3-oxobutyl phosphate from D-ribulose 5-phosphate: step 1/1. Catalyzes the conversion of D-ribulose 5-phosphate to formate and 3,4-dihydroxy-2-butanone 4-phosphate. This Ralstonia nicotianae (strain ATCC BAA-1114 / GMI1000) (Ralstonia solanacearum) protein is 3,4-dihydroxy-2-butanone 4-phosphate synthase.